The primary structure comprises 131 residues: Small ribosomal subunit protein uS8 (131 aa).

The protein belongs to the universal ribosomal protein uS8 family. In terms of assembly, part of the 30S ribosomal subunit. Contacts proteins S5 and S12.

Functionally, one of the primary rRNA binding proteins, it binds directly to 16S rRNA central domain where it helps coordinate assembly of the platform of the 30S subunit. The protein is Small ribosomal subunit protein uS8 of Alkalilimnicola ehrlichii (strain ATCC BAA-1101 / DSM 17681 / MLHE-1).